A 417-amino-acid polypeptide reads, in one-letter code: Cytochrome b-c1 complex subunit 2, mitochondrial (417 aa).

Residues 1–22 constitute a mitochondrion transit peptide; sequence MTRGVPRLAVAARHFSTAEAAG.

The protein belongs to the peptidase M16 family. UQCRC2/QCR2 subfamily. In terms of assembly, component of the ubiquinol-cytochrome c oxidoreductase (cytochrome b-c1 complex, complex III, CIII), a multisubunit enzyme composed of 3 respiratory subunits cytochrome b, cytochrome c1 and Rieske protein, 2 core protein subunits, and additional low-molecular weight protein subunits. The complex exists as an obligatory dimer and forms supercomplexes (SCs) in the inner mitochondrial membrane with cytochrome c oxidase (complex IV, CIV).

The protein localises to the mitochondrion inner membrane. Functionally, component of the ubiquinol-cytochrome c oxidoreductase, a multisubunit transmembrane complex that is part of the mitochondrial electron transport chain which drives oxidative phosphorylation. The respiratory chain contains 3 multisubunit complexes succinate dehydrogenase (complex II, CII), ubiquinol-cytochrome c oxidoreductase (cytochrome b-c1 complex, complex III, CIII) and cytochrome c oxidase (complex IV, CIV), that cooperate to transfer electrons derived from NADH and succinate to molecular oxygen, creating an electrochemical gradient over the inner membrane that drives transmembrane transport and the ATP synthase. The cytochrome b-c1 complex catalyzes electron transfer from ubiquinol to cytochrome c, linking this redox reaction to translocation of protons across the mitochondrial inner membrane, with protons being carried across the membrane as hydrogens on the quinol. In the process called Q cycle, 2 protons are consumed from the matrix, 4 protons are released into the intermembrane space and 2 electrons are passed to cytochrome c. The chain is Cytochrome b-c1 complex subunit 2, mitochondrial (QCR2) from Yarrowia lipolytica (strain CLIB 122 / E 150) (Yeast).